We begin with the raw amino-acid sequence, 118 residues long: Vitelline membrane protein Vm32E (118 aa).

A signal peptide spans 1–17 (MKIVALTLVAFVALAGA). The 40-residue stretch at 36-75 (GYPAPPCPTNYLFSCQPNLAPAPCAQEAQAPAYGSAGAYT) folds into the VM domain.

Belongs to the vitelline membrane family.

The protein localises to the secreted. Major early eggshell protein. The chain is Vitelline membrane protein Vm32E from Drosophila simulans (Fruit fly).